The sequence spans 591 residues: Inactive metallocarboxypeptidase ECM14 (591 aa).

The first 21 residues, M1–A21, serve as a signal peptide directing secretion. Residues I22 to S175 constitute a propeptide that is removed on maturation. The 321-residue stretch at D203–L523 folds into the Peptidase M14 domain. The Zn(2+) site is built by H265 and E268. Substrate is bound by residues H265–E268, R323, and D340–R341. An intrachain disulfide couples C334 to C357. N-linked (GlcNAc...) asparagine glycosylation is found at N350, N381, and N386. H397 contributes to the Zn(2+) binding site. S398–Y399 contacts substrate. Residues D533–R591 form a disordered region. Acidic residues-rich tracts occupy residues D546–D559 and N573–E582.

Belongs to the peptidase M14 family. Requires Zn(2+) as cofactor.

It is found in the vacuole. Its subcellular location is the secreted. Its function is as follows. Inactive carboxypeptidase that may play a role in cell wall organization and biogenesis. The sequence is that of Inactive metallocarboxypeptidase ECM14 (ECM14) from Paracoccidioides brasiliensis (strain Pb03).